We begin with the raw amino-acid sequence, 190 residues long: Putative phosphatidylethanolamine-binding protein (190 aa).

The protein belongs to the phosphatidylethanolamine-binding protein family.

The sequence is that of Putative phosphatidylethanolamine-binding protein from Plasmodium falciparum.